Reading from the N-terminus, the 311-residue chain is Aspartate carbamoyltransferase catalytic subunit (311 aa).

Carbamoyl phosphate is bound by residues arginine 58 and threonine 59. Lysine 86 is an L-aspartate binding site. Carbamoyl phosphate contacts are provided by arginine 108, histidine 136, and glutamine 139. Arginine 169 and arginine 223 together coordinate L-aspartate. Carbamoyl phosphate contacts are provided by glycine 264 and proline 265.

This sequence belongs to the aspartate/ornithine carbamoyltransferase superfamily. ATCase family. In terms of assembly, heterododecamer (2C3:3R2) of six catalytic PyrB chains organized as two trimers (C3), and six regulatory PyrI chains organized as three dimers (R2).

It catalyses the reaction carbamoyl phosphate + L-aspartate = N-carbamoyl-L-aspartate + phosphate + H(+). It participates in pyrimidine metabolism; UMP biosynthesis via de novo pathway; (S)-dihydroorotate from bicarbonate: step 2/3. Its function is as follows. Catalyzes the condensation of carbamoyl phosphate and aspartate to form carbamoyl aspartate and inorganic phosphate, the committed step in the de novo pyrimidine nucleotide biosynthesis pathway. The sequence is that of Aspartate carbamoyltransferase catalytic subunit from Pelodictyon phaeoclathratiforme (strain DSM 5477 / BU-1).